We begin with the raw amino-acid sequence, 245 residues long: Probable transcriptional regulatory protein BF2589 (245 aa).

The disordered stretch occupies residues 225–245; it reads EDEDVQNVYTNMKPADNEGEE.

This sequence belongs to the TACO1 family.

The protein localises to the cytoplasm. This chain is Probable transcriptional regulatory protein BF2589, found in Bacteroides fragilis (strain ATCC 25285 / DSM 2151 / CCUG 4856 / JCM 11019 / LMG 10263 / NCTC 9343 / Onslow / VPI 2553 / EN-2).